A 122-amino-acid polypeptide reads, in one-letter code: UPF0102 protein Cgl2031/cg2228 (122 aa).

The protein belongs to the UPF0102 family.

This chain is UPF0102 protein Cgl2031/cg2228, found in Corynebacterium glutamicum (strain ATCC 13032 / DSM 20300 / JCM 1318 / BCRC 11384 / CCUG 27702 / LMG 3730 / NBRC 12168 / NCIMB 10025 / NRRL B-2784 / 534).